A 255-amino-acid polypeptide reads, in one-letter code: tRNA (adenine(58)-N(1))-methyltransferase TrmI (255 aa).

S-adenosyl-L-methionine-binding positions include 104–107 (SGGL), Glu125, His130, Glu155, and Asp170.

The protein belongs to the class I-like SAM-binding methyltransferase superfamily. TRM61 family. Homotetramer composed of a dimer of dimers.

The catalysed reaction is adenosine(58) in tRNA + S-adenosyl-L-methionine = N(1)-methyladenosine(58) in tRNA + S-adenosyl-L-homocysteine + H(+). Functionally, catalyzes the S-adenosyl-L-methionine-dependent formation of N(1)-methyladenine at position 58 (m1A58) in tRNA. Is required for cell growth at extreme temperatures. This chain is tRNA (adenine(58)-N(1))-methyltransferase TrmI (trmI), found in Thermus thermophilus (strain ATCC BAA-163 / DSM 7039 / HB27).